The chain runs to 205 residues: High frequency lysogenization protein HflD homolog (205 aa).

It belongs to the HflD family.

The protein resides in the cytoplasm. Its subcellular location is the cell inner membrane. This Vibrio atlanticus (strain LGP32) (Vibrio splendidus (strain Mel32)) protein is High frequency lysogenization protein HflD homolog.